We begin with the raw amino-acid sequence, 640 residues long: MLISTLPLLLHEQLAQSTRMRVLCVAEKNSIAKEVAKILSGGRARPRNSLYKYVKNYDFQYTFQGLGPCDVTMTAVAGHVLTTDFGPEYAWGKCPPGRLFDAPFLTKPPPDRDQRAGILKNIIREARNADRLMIWTDCDREGEYIGWEIMSVAQGANPRLNLQTTWRAQFSHLEPQHIVAAANNPKALDMKLVAAVECRTEFDLRVGTLFTRFLTNIYKSKRLVGEKEVVSYGTCQFPTLSFVVDRYVRVRNFRPEPFWSIDLAVTKNGQKVNFSWSRNHLFDRMFVYVIYAQLLEGPQKPRIVGVSTKPTSHYKPLPLTTVDLQKCCSRYFKMLAKAALDAAELLYTAGYISYPRTETDQFPAKLDLKGYITKQTLSLDWGTHATRLLQGSFRPPRGGKHDDKAHPPIYPVKSASLDTLRPDQRKVYEFVVRRFLACCSDDARGLQTKVDLQWRSERFTALGLQVTERNFLDVYPYSDWKSLAQLPEFAEGEEVTPSSCKVKEGKTSPPNYMTEAELIALMDANGIGTDATIADHVEKIAQRNYVTRRKIGKSEVFIPTSLGISLIDAFDAILIDRISLLKPFLRRAMEGFLQKISRGEITKQDVISQLLPLYKEAFMESNQKGHVISDTFIQTSRGLS.

In terms of domain architecture, Toprim spans 21-175; sequence RVLCVAEKNS…WRAQFSHLEP (155 aa). Positions 27, 137, and 139 each coordinate Mg(2+). The 430-residue stretch at 189–618 folds into the Topo IA-type catalytic domain; it reads DMKLVAAVEC…QLLPLYKEAF (430 aa). Y354 functions as the O-(5'-phospho-DNA)-tyrosine intermediate in the catalytic mechanism.

It belongs to the type IA topoisomerase family. It depends on Mg(2+) as a cofactor.

It catalyses the reaction ATP-independent breakage of single-stranded DNA, followed by passage and rejoining.. In terms of biological role, introduces a single-strand break via transesterification at a target site in duplex DNA. Releases the supercoiling and torsional tension of DNA introduced during the DNA replication and transcription by transiently cleaving and rejoining one strand of the DNA duplex. The scissile phosphodiester is attacked by the catalytic tyrosine of the enzyme, resulting in the formation of a DNA-(5'-phosphotyrosyl)-enzyme intermediate and the expulsion of a 3'-OH DNA strand. The sequence is that of DNA topoisomerase 3 (TOP3) from Candidozyma auris (Yeast).